We begin with the raw amino-acid sequence, 275 residues long: 4-diphosphocytidyl-2-C-methyl-D-erythritol kinase (275 aa).

Residue Lys8 is part of the active site. Pro86 to Ser96 contacts ATP. Asp125 is an active-site residue.

This sequence belongs to the GHMP kinase family. IspE subfamily.

The enzyme catalyses 4-CDP-2-C-methyl-D-erythritol + ATP = 4-CDP-2-C-methyl-D-erythritol 2-phosphate + ADP + H(+). It participates in isoprenoid biosynthesis; isopentenyl diphosphate biosynthesis via DXP pathway; isopentenyl diphosphate from 1-deoxy-D-xylulose 5-phosphate: step 3/6. Catalyzes the phosphorylation of the position 2 hydroxy group of 4-diphosphocytidyl-2C-methyl-D-erythritol. The chain is 4-diphosphocytidyl-2-C-methyl-D-erythritol kinase from Thermus thermophilus (strain ATCC BAA-163 / DSM 7039 / HB27).